The chain runs to 206 residues: Urease accessory protein UreG (206 aa).

GTP is bound at residue 14–21 (GPVGSGKT).

Belongs to the SIMIBI class G3E GTPase family. UreG subfamily. As to quaternary structure, homodimer. UreD, UreF and UreG form a complex that acts as a GTP-hydrolysis-dependent molecular chaperone, activating the urease apoprotein by helping to assemble the nickel containing metallocenter of UreC. The UreE protein probably delivers the nickel.

Its subcellular location is the cytoplasm. In terms of biological role, facilitates the functional incorporation of the urease nickel metallocenter. This process requires GTP hydrolysis, probably effectuated by UreG. This is Urease accessory protein UreG from Aliivibrio fischeri (strain ATCC 700601 / ES114) (Vibrio fischeri).